Here is a 578-residue protein sequence, read N- to C-terminus: Probable lysosomal cobalamin transporter (578 aa).

Helical transmembrane passes span 8–28 and 46–66; these read LIWV…SVFI and IFAI…VALV. Asn70 carries N-linked (GlcNAc...) asparagine glycosylation. Transmembrane regions (helical) follow at residues 95–115 and 145–165; these read VVYY…IPFT and TITF…VPVA. The N-linked (GlcNAc...) asparagine glycan is linked to Asn168. 6 helical membrane-spanning segments follow: residues 188–208, 312–332, 347–367, 375–395, 419–439, and 506–526; these read ALTF…VLYT, LLGG…MLLT, GYIL…VQAA, VIFT…IAIV, LTTA…SMVV, and FFGV…LIVV. The tract at residues 539–578 is disordered; it reads RQMDEDAEEAEEEGLLASTGRRLDTAWQDITGRSNRQRDS. A compositionally biased stretch (acidic residues) spans 540–552; that stretch reads QMDEDAEEAEEEG.

This sequence belongs to the LIMR family. LMBRD1 subfamily.

It localises to the lysosome membrane. Probable lysosomal cobalamin transporter. Required to export cobalamin from lysosomes allowing its conversion to cofactors. The protein is Probable lysosomal cobalamin transporter of Aspergillus terreus (strain NIH 2624 / FGSC A1156).